Reading from the N-terminus, the 231-residue chain is Large ribosomal subunit protein uL1 (231 aa).

Belongs to the universal ribosomal protein uL1 family. Part of the 50S ribosomal subunit.

Functionally, binds directly to 23S rRNA. The L1 stalk is quite mobile in the ribosome, and is involved in E site tRNA release. In terms of biological role, protein L1 is also a translational repressor protein, it controls the translation of the L11 operon by binding to its mRNA. The polypeptide is Large ribosomal subunit protein uL1 (Herminiimonas arsenicoxydans).